The primary structure comprises 296 residues: 4-diphosphocytidyl-2-C-methyl-D-erythritol kinase (296 aa).

The active site involves lysine 19. ATP is bound at residue 102-112 (PMGAGLGGGSS). The active site involves aspartate 144.

Belongs to the GHMP kinase family. IspE subfamily.

It catalyses the reaction 4-CDP-2-C-methyl-D-erythritol + ATP = 4-CDP-2-C-methyl-D-erythritol 2-phosphate + ADP + H(+). The protein operates within isoprenoid biosynthesis; isopentenyl diphosphate biosynthesis via DXP pathway; isopentenyl diphosphate from 1-deoxy-D-xylulose 5-phosphate: step 3/6. Its function is as follows. Catalyzes the phosphorylation of the position 2 hydroxy group of 4-diphosphocytidyl-2C-methyl-D-erythritol. The protein is 4-diphosphocytidyl-2-C-methyl-D-erythritol kinase of Burkholderia pseudomallei (strain 1710b).